The sequence spans 201 residues: Dephospho-CoA kinase (201 aa).

One can recognise a DPCK domain in the interval 4–201 (IIGITGGIAS…LEGGRQDDRD (198 aa)). 12-17 (ASGKST) is a binding site for ATP.

The protein belongs to the CoaE family.

Its subcellular location is the cytoplasm. It catalyses the reaction 3'-dephospho-CoA + ATP = ADP + CoA + H(+). It functions in the pathway cofactor biosynthesis; coenzyme A biosynthesis; CoA from (R)-pantothenate: step 5/5. Its function is as follows. Catalyzes the phosphorylation of the 3'-hydroxyl group of dephosphocoenzyme A to form coenzyme A. This Streptococcus pneumoniae serotype 4 (strain ATCC BAA-334 / TIGR4) protein is Dephospho-CoA kinase.